A 118-amino-acid chain; its full sequence is Large ribosomal subunit protein uL24 (118 aa).

It belongs to the universal ribosomal protein uL24 family. In terms of assembly, part of the 50S ribosomal subunit.

Its function is as follows. One of two assembly initiator proteins, it binds directly to the 5'-end of the 23S rRNA, where it nucleates assembly of the 50S subunit. Functionally, one of the proteins that surrounds the polypeptide exit tunnel on the outside of the subunit. The polypeptide is Large ribosomal subunit protein uL24 (Prochlorococcus marinus (strain NATL2A)).